A 26-amino-acid chain; its full sequence is Turripeptide OL49 (26 aa).

Post-translationally, contains 3 disulfide bonds. In terms of tissue distribution, expressed by the venom duct.

It is found in the secreted. In terms of biological role, acts as a neurotoxin by inhibiting an ion channel. The sequence is that of Turripeptide OL49 from Iotyrris olangoensis (Sea snail).